A 245-amino-acid chain; its full sequence is tRNA pseudouridine synthase A (245 aa).

Asp-52 serves as the catalytic Nucleophile. Tyr-111 lines the substrate pocket.

It belongs to the tRNA pseudouridine synthase TruA family. Homodimer.

The enzyme catalyses uridine(38/39/40) in tRNA = pseudouridine(38/39/40) in tRNA. Its function is as follows. Formation of pseudouridine at positions 38, 39 and 40 in the anticodon stem and loop of transfer RNAs. The sequence is that of tRNA pseudouridine synthase A from Rickettsia rickettsii (strain Iowa).